Consider the following 173-residue polypeptide: MSRQSPSYADCVCSLRTSLAFLESSVATLDNGVQDFPRLCHVLRTVRHYELIPQTTLAAAEASLRDEIGPFIQLLLDRAEKHLDRQARRIETLKARAELNAGRLSQYSGDGHNNGKFSGQGMDFRKSRPLNGEAALRAKVVRQRKEALKYSVERLEMEVRQKERELKLRLEQA.

This sequence belongs to the DASH complex SPC19 family. In terms of assembly, component of the DASH complex consisting of ASK1, DAD1, DAD2, DAD3, DAD4, DAM1, DUO1, HSK3, SPC19 and SPC34, with a stoichiometry of one copy of each subunit per complex. Multiple DASH complexes oligomerize to form a ring that encircles spindle microtubules and organizes the rod-like NDC80 complexes of the outer kinetochore. DASH complex oligomerization strengthens microtubule attachments. On cytoplasmic microtubules, DASH complexes appear to form patches instead of rings.

The protein resides in the nucleus. It is found in the cytoplasm. The protein localises to the cytoskeleton. Its subcellular location is the spindle. It localises to the chromosome. The protein resides in the centromere. It is found in the kinetochore. In terms of biological role, component of the DASH complex that connects microtubules with kinetochores and couples microtubule depolymerisation to chromosome movement; it is involved in retrieving kinetochores to the spindle poles before their re-orientation on the spindle in early mitosis and allows microtubule depolymerization to pull chromosomes apart and resist detachment during anaphase. Kinetochores, consisting of a centromere-associated inner segment and a microtubule-contacting outer segment, play a crucial role in chromosome segregation by mediating the physical connection between centromeric DNA and microtubules. Kinetochores also serve as an input point for the spindle assembly checkpoint, which delays anaphase until all chromosomes have bioriented on the mitotic spindle. This Chaetomium thermophilum (strain DSM 1495 / CBS 144.50 / IMI 039719) (Thermochaetoides thermophila) protein is DASH complex subunit SPC19.